The chain runs to 369 residues: MYTTGNHTINDSFGTAFMIGSFDVRYYGILYATGILVAIIAGILTLKYKYKVDDNPYFYYVFIGIISIIFGARTWSFIIGDSIVGVTPFFAIHQGGLAIQGGVIFTITTGLIFFFFILRKPKYYVKKNYLVYENHNLVTKTFYKQASMWIYADAIIPTILIGQAIGRWGNFFNHEVYGQGLTAEQALNQWGFLKVLMPGVFEHMFINENGVTLFRVPIFLIESFFNVIAFIIIVFLLDFVKELKTGGRTMLYFFTTGIIRLIIETQRDSQFKFVTSIVTSVLFLLGGSIGFIFTQWIFPRFRNKKNYFFLFNKVKIYFIGLFKNYLNKYKNLTKEEIRKKLEPSSTIYSKNFSEMFFYADDYDLMIKKD.

The next 3 membrane-spanning stretches (helical) occupy residues Y26–L46, Y60–G80, and L97–I117. An a 1,2-diacyl-sn-glycero-3-phospho-(1'-sn-glycerol)-binding site is contributed by R167. Helical transmembrane passes span V216–L236 and F273–F293.

This sequence belongs to the Lgt family.

It localises to the cell membrane. It carries out the reaction L-cysteinyl-[prolipoprotein] + a 1,2-diacyl-sn-glycero-3-phospho-(1'-sn-glycerol) = an S-1,2-diacyl-sn-glyceryl-L-cysteinyl-[prolipoprotein] + sn-glycerol 1-phosphate + H(+). It functions in the pathway protein modification; lipoprotein biosynthesis (diacylglyceryl transfer). Catalyzes the transfer of the diacylglyceryl group from phosphatidylglycerol to the sulfhydryl group of the N-terminal cysteine of a prolipoprotein, the first step in the formation of mature lipoproteins. In Mycoplasmoides gallisepticum (strain R(low / passage 15 / clone 2)) (Mycoplasma gallisepticum), this protein is Phosphatidylglycerol--prolipoprotein diacylglyceryl transferase.